The following is a 107-amino-acid chain: Auxin-responsive protein SAUR50 (107 aa).

The protein belongs to the ARG7 family. Interacts with BZR1. Expressed in cotyledons, leaves, flowers and siliques.

It localises to the cell membrane. Functionally, provide a mechanistic link between auxin and plasma membrane H(+)-ATPases (PM H(+)-ATPases, e.g. AHA1 and AHA2), and triggers PM H(+)-ATPases activity by promoting phosphorylation of their C-terminal autoinhibitory domain as a result of PP2C-D subfamily of type 2C phosphatases inhibition, thus leading to the acidification of the apoplast and the facilitation of solutes and water uptake to drive cell expansion. Triggers plant growth probably by promoting cell elongation. Regulates branch angles and bending. Effector of hormonal and environmental signals in plant growth. This is Auxin-responsive protein SAUR50 from Arabidopsis thaliana (Mouse-ear cress).